Reading from the N-terminus, the 317-residue chain is Acetyl-coenzyme A carboxylase carboxyl transferase subunit alpha (317 aa).

In terms of domain architecture, CoA carboxyltransferase C-terminal spans arginine 39–glutamate 293.

This sequence belongs to the AccA family. Acetyl-CoA carboxylase is a heterohexamer composed of biotin carboxyl carrier protein (AccB), biotin carboxylase (AccC) and two subunits each of ACCase subunit alpha (AccA) and ACCase subunit beta (AccD).

Its subcellular location is the cytoplasm. The catalysed reaction is N(6)-carboxybiotinyl-L-lysyl-[protein] + acetyl-CoA = N(6)-biotinyl-L-lysyl-[protein] + malonyl-CoA. It functions in the pathway lipid metabolism; malonyl-CoA biosynthesis; malonyl-CoA from acetyl-CoA: step 1/1. Functionally, component of the acetyl coenzyme A carboxylase (ACC) complex. First, biotin carboxylase catalyzes the carboxylation of biotin on its carrier protein (BCCP) and then the CO(2) group is transferred by the carboxyltransferase to acetyl-CoA to form malonyl-CoA. The sequence is that of Acetyl-coenzyme A carboxylase carboxyl transferase subunit alpha from Neisseria gonorrhoeae (strain NCCP11945).